Here is a 224-residue protein sequence, read N- to C-terminus: MSPAFNASPNQLTLALSKGRIFKETLPLLEAAGIRVMEDPETSRKLILPTSDPAVRVIIVRASDVPTYVQYGAADFGVAGKDVLMEHGMTGLYAPIDLNIARCRMSVAVPAGFDYANAVRQGARLSVATKYVQTAREHFAKKGVHVDLIKLYGSMELGPLVGLSDAIVDLVSTGGTLRANNLVEVEEIVQISSRLVVNQAALKLKRERLTPILDAFEKASAALA.

The protein belongs to the ATP phosphoribosyltransferase family. Short subfamily. Heteromultimer composed of HisG and HisZ subunits.

The protein resides in the cytoplasm. The catalysed reaction is 1-(5-phospho-beta-D-ribosyl)-ATP + diphosphate = 5-phospho-alpha-D-ribose 1-diphosphate + ATP. The protein operates within amino-acid biosynthesis; L-histidine biosynthesis; L-histidine from 5-phospho-alpha-D-ribose 1-diphosphate: step 1/9. Catalyzes the condensation of ATP and 5-phosphoribose 1-diphosphate to form N'-(5'-phosphoribosyl)-ATP (PR-ATP). Has a crucial role in the pathway because the rate of histidine biosynthesis seems to be controlled primarily by regulation of HisG enzymatic activity. This chain is ATP phosphoribosyltransferase, found in Cupriavidus pinatubonensis (strain JMP 134 / LMG 1197) (Cupriavidus necator (strain JMP 134)).